A 1424-amino-acid polypeptide reads, in one-letter code: Serine/threonine-protein kinase LMTK3 (1424 aa).

The N-terminal stretch at 1–20 is a signal peptide; that stretch reads MPAPGALILLAAVSASGCLA. A helical membrane pass occupies residues 40–60; that stretch reads AVVLISCSGLLAFIFLLLTCL. Residues 74-95 form a disordered region; that stretch reads NPEGEDCSGEYTPPAEETSSSQ. Residues 133-411 form the Protein kinase domain; it reads LSYLQEIGSG…SDLQLQLTYL (279 aa). Residues 139 to 147 and Lys164 each bind ATP; that span reads IGSGWFGKV. Phosphoserine is present on Ser232. Asp266 (proton acceptor) is an active-site residue. Disordered stretches follow at residues 413–465 and 486–516; these read SERP…PDDV and RGAGRGGGAPPWQPASAPPAPHTNPSNPFYE. Residues 418 to 439 show a composition bias toward pro residues; the sequence is RPPPPPPPPRDGPFPWPWPPSH. Arg490 is modified (omega-N-methylarginine). Residues 496 to 507 are compositionally biased toward pro residues; it reads PWQPASAPPAPH. Phosphoserine occurs at positions 531 and 535. 5 disordered regions span residues 544–666, 680–964, 976–1024, 1041–1313, and 1325–1424; these read EHGS…PLPC, LERG…MSPE, MSPK…APET, GLEM…RKRK, and LFDQ…PVEN. Positions 571 to 584 are enriched in polar residues; it reads QTPSEVPQLVSETW. The span at 638–647 shows a compositional bias: acidic residues; sequence AEEEEEESSP. Over residues 700–713 the composition is skewed to basic and acidic residues; it reads PPEDDSSLRAERGS. Positions 744–758 are enriched in pro residues; that stretch reads RGPPPAPPPPPPPPR. Low complexity predominate over residues 759–791; it reads ASAEPAASPDPPSALASPGSGLSSPGPKPGDSG. Residues 818 to 841 are compositionally biased toward pro residues; the sequence is PRAPPEPPDPGAPRPPPDPGPLPL. Positions 935–954 are enriched in basic and acidic residues; it reads DMKEKVAENGLESPEKEERA. Residues Ser947, Ser962, and Ser977 each carry the phosphoserine modification. Residues 994 to 1004 are compositionally biased toward basic and acidic residues; the sequence is RNTERPPEIGP. The span at 1084 to 1094 shows a compositional bias: gly residues; that stretch reads GSGGRALGGVG. Positions 1095–1105 are enriched in low complexity; that stretch reads TAPAGGPASAV. Positions 1167 to 1177 are enriched in basic and acidic residues; the sequence is DPLKPERKGPE. Residues 1200-1213 are compositionally biased toward low complexity; the sequence is SRLSLALPPLTLTP. Residues 1231-1241 are compositionally biased toward gly residues; that stretch reads AAGGEAGGAGA. Acidic residues predominate over residues 1245–1261; the sequence is AEEDGEDEDEDEEDEEA. A compositionally biased stretch (basic and acidic residues) spans 1262-1272; the sequence is AGSRDPGRTRE. Residues 1329-1339 are compositionally biased toward polar residues; it reads ETPTNELSVQG. Over residues 1348–1360 the composition is skewed to pro residues; that stretch reads STPPAPPTPPHPT.

It belongs to the protein kinase superfamily. Tyr protein kinase family. Interacts with ESR1. Interacts with AP-2 complex subunit alpha. Requires Mg(2+) as cofactor. In terms of processing, autophosphorylated. In terms of tissue distribution, expressed in brain. Predominantly expressed in cerebral cortex, thalamus, the cerebellum and hippocampal formation (at protein level).

Its subcellular location is the membrane. The protein localises to the cell projection. It is found in the axon. It localises to the dendrite. The protein resides in the golgi apparatus membrane. The catalysed reaction is L-seryl-[protein] + ATP = O-phospho-L-seryl-[protein] + ADP + H(+). It catalyses the reaction L-threonyl-[protein] + ATP = O-phospho-L-threonyl-[protein] + ADP + H(+). Protein kinase which phosphorylates ESR1 (in vitro) and protects it against proteasomal degradation. May also regulate ESR1 levels indirectly via a PKC-AKT-FOXO3 pathway where it decreases the activity of PKC and the phosphorylation of AKT, thereby increasing binding of transcriptional activator FOXO3 to the ESR1 promoter and increasing ESR1 transcription. Involved in endocytic trafficking of N-methyl-D-aspartate receptors (NMDAR) in neurons. This is Serine/threonine-protein kinase LMTK3 (Lmtk3) from Mus musculus (Mouse).